A 186-amino-acid chain; its full sequence is UPF0200 protein Mbar_A0975 (186 aa).

8 to 15 contributes to the ATP binding site; that stretch reads GMPASGKS.

It belongs to the UPF0200 family.

In Methanosarcina barkeri (strain Fusaro / DSM 804), this protein is UPF0200 protein Mbar_A0975.